Reading from the N-terminus, the 75-residue chain is Sec-independent protein translocase protein TatA (75 aa).

A helical transmembrane segment spans residues 1–21; the sequence is MGSFSIWHWLIVLVIIALVFG. The disordered stretch occupies residues 45–75; that stretch reads DASADKPADQVTQQRVSDDTIDVQAKEKSNS.

Belongs to the TatA/E family. The Tat system comprises two distinct complexes: a TatABC complex, containing multiple copies of TatA, TatB and TatC subunits, and a separate TatA complex, containing only TatA subunits. Substrates initially bind to the TatABC complex, which probably triggers association of the separate TatA complex to form the active translocon.

The protein localises to the cell inner membrane. In terms of biological role, part of the twin-arginine translocation (Tat) system that transports large folded proteins containing a characteristic twin-arginine motif in their signal peptide across membranes. TatA could form the protein-conducting channel of the Tat system. The protein is Sec-independent protein translocase protein TatA of Bordetella bronchiseptica (strain ATCC BAA-588 / NCTC 13252 / RB50) (Alcaligenes bronchisepticus).